A 302-amino-acid polypeptide reads, in one-letter code: Recombination-associated protein RdgC (302 aa).

It belongs to the RdgC family.

It is found in the cytoplasm. The protein localises to the nucleoid. In terms of biological role, may be involved in recombination. This Xylella fastidiosa (strain 9a5c) protein is Recombination-associated protein RdgC.